The following is a 99-amino-acid chain: MPTQLEMAMDTMIRIFHRYSGKERKRFKLSKGELKLLLQRELTEFLSCQKETQLVDKIVQDLDANKDNEVDFNEFVVMVAALTVACNDYFVEQLKKKGK.

EF-hand domains are found at residues isoleucine 13 to cysteine 48 and lysine 50 to alanine 85. Positions 20, 23, 28, 33, 63, 65, 67, 69, and 74 each coordinate Ca(2+).

It belongs to the S-100 family. In terms of assembly, homodimer. Interacts with S100P. In terms of tissue distribution, highest level of expression in spleen and leukocytes.

The protein is Protein S100-Z of Homo sapiens (Human).